Here is a 657-residue protein sequence, read N- to C-terminus: Probable intron-encoded endonuclease aI2 (657 aa).

The tract at residues 1 to 245 (MKQMSYVTRW…TYEHLFWFFG (245 aa)) is COX1 exons 1 to 2 encoded. The next 6 helical transmembrane spans lie at 19–39 (IGMT…GMSV), 69–89 (LLMM…NFFL), 103–123 (LNNI…CSVL), 152–172 (AMFA…NFMV), 188–208 (PLFA…LPVL), and 269–289 (MYFI…ANMV). The COX1 intron 2 encoded stretch occupies residues 246–657 (QWWPTNYVNN…KFENKWNKKF (412 aa)).

In the C-terminal section; belongs to the LAGLIDADG endonuclease family. This sequence in the N-terminal section; belongs to the heme-copper respiratory oxidase family. In terms of processing, the mature protein may arise from proteolytic cleavage of an in-frame translation of COX1 exons 1 and 2 plus intron 2, containing the aI2 open reading frame.

It localises to the mitochondrion. Its subcellular location is the membrane. Functionally, mitochondrial DNA endonuclease involved in intron homing. This chain is Probable intron-encoded endonuclease aI2 (aI2), found in Debaryomyces hansenii (strain ATCC 36239 / CBS 767 / BCRC 21394 / JCM 1990 / NBRC 0083 / IGC 2968) (Yeast).